The following is a 360-amino-acid chain: MTKKIIFTGGGTAGHVTLNLILIPKFIKDGWEVHYIGDDKGIEHQEIKKSGLDVTFHAIATGKLRRYFSWQNLLDIFKVGFGVMQSLFIIARLRPKALFSKGGFVSVPPVIAARLLGVPAFIHESDLSMGLANRIAYRFATTMYTTFEQEQTLAKLKHVGAVTKVTGPGSRSVTSKQLEAVLEYFDPNLKTLLFIGGSAGARVFNRFITDHPELKEDFNIINISGDPSLNELSWHLYRVDYVTDLYQPLMEMADLVVTRGGSNTLFELLAMRKLQLIIPLGKEASRGDQLENAHYFTTRGYAEQLLEQELTLPHFQEKVREVFAKQSDYLSAMKSSSELQSPESFYQLLSADISSATKEN.

UDP-N-acetyl-alpha-D-glucosamine is bound by residues T12 to G14, S198, and Q289.

It belongs to the glycosyltransferase 28 family. MurG subfamily.

The protein resides in the cell membrane. The catalysed reaction is Mur2Ac(oyl-L-Ala-gamma-D-Glu-L-Lys-D-Ala-D-Ala)-di-trans,octa-cis-undecaprenyl diphosphate + UDP-N-acetyl-alpha-D-glucosamine = beta-D-GlcNAc-(1-&gt;4)-Mur2Ac(oyl-L-Ala-gamma-D-Glu-L-Lys-D-Ala-D-Ala)-di-trans,octa-cis-undecaprenyl diphosphate + UDP + H(+). It participates in cell wall biogenesis; peptidoglycan biosynthesis. Cell wall formation. Catalyzes the transfer of a GlcNAc subunit on undecaprenyl-pyrophosphoryl-MurNAc-pentapeptide (lipid intermediate I) to form undecaprenyl-pyrophosphoryl-MurNAc-(pentapeptide)GlcNAc (lipid intermediate II). This is UDP-N-acetylglucosamine--N-acetylmuramyl-(pentapeptide) pyrophosphoryl-undecaprenol N-acetylglucosamine transferase from Streptococcus equi subsp. equi (strain 4047).